The chain runs to 346 residues: Dynein regulatory complex protein 9 (346 aa).

Positions 299 to 308 (MEKEQREKNA) are enriched in basic and acidic residues. Positions 299–346 (MEKEQREKNAATKIQAWWRGTLVRKGPRSKKADKSKKKDGKKGKKKRK) are disordered. In terms of domain architecture, IQ spans 305–334 (EKNAATKIQAWWRGTLVRKGPRSKKADKSK). Positions 323–346 (KGPRSKKADKSKKKDGKKGKKKRK) are enriched in basic residues.

The protein belongs to the DRC9 family. As to quaternary structure, component of the nexin-dynein regulatory complex (N-DRC). Interacts (via IQ domain) with calmodulin when calcium levels are low. Does not interact with calmodulin in the presence of Ca(2+). Interacts with hsp70 and may form a complex with camk4 and hsp70. In terms of tissue distribution, detected in adult testis, and at lower levels in brain, kidney and ovary.

The protein resides in the cytoplasm. It is found in the cell projection. The protein localises to the cilium. Its subcellular location is the flagellum. It localises to the cytoskeleton. The protein resides in the flagellum axoneme. Its function is as follows. Component of the nexin-dynein regulatory complex (N-DRC), a key regulator of ciliary/flagellar motility which maintains the alignment and integrity of the distal axoneme and regulates microtubule sliding in motile axonemes. Binds calmodulin when cellular Ca(2+) levels are low and thereby contributes to the regulation of calcium and calmodulin-dependent protein kinase IV (camk4) activity; contributes to the regulation of camk4 signaling cascades. Plays a role in the regulation of definitive hematopoiesis via its effects on camk4. The polypeptide is Dynein regulatory complex protein 9 (Danio rerio (Zebrafish)).